A 101-amino-acid chain; its full sequence is ATP-dependent Clp protease adapter protein ClpS 2 (101 aa).

Belongs to the ClpS family. Binds to the N-terminal domain of the chaperone ClpA.

Involved in the modulation of the specificity of the ClpAP-mediated ATP-dependent protein degradation. This Mesorhizobium japonicum (strain LMG 29417 / CECT 9101 / MAFF 303099) (Mesorhizobium loti (strain MAFF 303099)) protein is ATP-dependent Clp protease adapter protein ClpS 2.